A 364-amino-acid chain; its full sequence is MEKLRVGIVFGGKSAEHEVSLQSAKNIVDAIDKSRFDVVLLGIDKQGQWHVSDASNYLLNADDPAHIALRPSATSLAQVPGKHEHQLIDAQNGQPLPTVDVIFPIVHGTLGEDGSLQGMLRVANLPFVGSDVLASAACMDKDVTKRLLRDAGLNIAPFITLTRANRHNISFAEVESKLGLPLFVKPANQGSSVGVSKVTSEEQYAIAVDLAFEFDHKVIVEQGIKGREIECAVLGNDNPQASTCGEIVLTSDFYAYDTKYIDEDGAKVVVPAAIAPEINDKIRAIAVQAYQTLGCAGMARVDVFLTPENEVVINEINTLPGFTNISMYPKLWQASGLGYTDLITRLIELALERHAADNALKTTM.

One can recognise an ATP-grasp domain in the interval 145–348 (KRLLRDAGLN…YTDLITRLIE (204 aa)). 175 to 230 (ESKLGLPLFVKPANQGSSVGVSKVTSEEQYAIAVDLAFEFDHKVIVEQGIKGREIE) contributes to the ATP binding site. 3 residues coordinate Mg(2+): aspartate 302, glutamate 315, and asparagine 317.

It belongs to the D-alanine--D-alanine ligase family. The cofactor is Mg(2+). It depends on Mn(2+) as a cofactor.

Its subcellular location is the cytoplasm. The enzyme catalyses 2 D-alanine + ATP = D-alanyl-D-alanine + ADP + phosphate + H(+). It participates in cell wall biogenesis; peptidoglycan biosynthesis. In terms of biological role, cell wall formation. The polypeptide is D-alanine--D-alanine ligase A (ddlA) (Escherichia coli O157:H7).